A 177-amino-acid chain; its full sequence is Large ribosomal subunit protein uL6 (177 aa).

The protein belongs to the universal ribosomal protein uL6 family. In terms of assembly, part of the 50S ribosomal subunit.

In terms of biological role, this protein binds to the 23S rRNA, and is important in its secondary structure. It is located near the subunit interface in the base of the L7/L12 stalk, and near the tRNA binding site of the peptidyltransferase center. The protein is Large ribosomal subunit protein uL6 of Pseudomonas entomophila (strain L48).